The following is a 134-amino-acid chain: Small ribosomal subunit protein uS9c (134 aa).

The protein belongs to the universal ribosomal protein uS9 family.

The protein localises to the plastid. Its subcellular location is the chloroplast. This is Small ribosomal subunit protein uS9c (rps9) from Thalassiosira pseudonana (Marine diatom).